Here is a 264-residue protein sequence, read N- to C-terminus: METDKRWSLAGKTALVTGGTRGIGRAVVEELAKFGAKVHTCSRNQEELNACLNDWKANGLVVSGSVCDASVRDQREKLIQEASSAFSGKLNILINNVGTNVRKPTVEYSSEEYAKIMSTNLESAFHLSQIAHPLLKASGVGSIVFISSVAGLVHLSSGSIYGATKGALNQLTRNLACEWASDNIRTNCVAPWYIKTSLVETLLEKKEFVEAVVSRTPLGRVGEPEEVSSLVAFLCLPASSYITGQVISVDGGFTVNGFSYAMKP.

Residue 15–39 (LVTGGTRGIGRAVVEELAKFGAKVH) participates in NADP(+) binding. S148 provides a ligand contact to substrate. The Proton acceptor role is filled by Y161.

Belongs to the short-chain dehydrogenases/reductases (SDR) family. SDR65C subfamily.

This Arabidopsis thaliana (Mouse-ear cress) protein is Tropinone reductase homolog At5g06060.